A 422-amino-acid chain; its full sequence is Enolase (422 aa).

Residue Gln-162 coordinates (2R)-2-phosphoglycerate. Glu-204 serves as the catalytic Proton donor. 3 residues coordinate Mg(2+): Asp-241, Glu-284, and Asp-311. Residues Lys-336, Arg-365, Ser-366, and Lys-387 each contribute to the (2R)-2-phosphoglycerate site. Lys-336 acts as the Proton acceptor in catalysis.

It belongs to the enolase family. Mg(2+) is required as a cofactor.

The protein localises to the cytoplasm. It localises to the secreted. Its subcellular location is the cell surface. It carries out the reaction (2R)-2-phosphoglycerate = phosphoenolpyruvate + H2O. The protein operates within carbohydrate degradation; glycolysis; pyruvate from D-glyceraldehyde 3-phosphate: step 4/5. Catalyzes the reversible conversion of 2-phosphoglycerate (2-PG) into phosphoenolpyruvate (PEP). It is essential for the degradation of carbohydrates via glycolysis. The sequence is that of Enolase from Bartonella tribocorum (strain CIP 105476 / IBS 506).